The following is a 1481-amino-acid chain: Chromosome partition protein MukB (1481 aa).

34–41 (GGNGAGKS) contributes to the ATP binding site. 5 coiled-coil regions span residues 338–480 (SLVQ…QAYQ), 509–604 (QHLA…APVW), 780–805 (RAARENRLEALYQERDSLAERYATLS), 835–1116 (EAEI…AKAG), and 1210–1265 (EAIE…LQAV). A flexible hinge region spans residues 666–783 (PSGAEDSRMI…EVPLFGRAAR (118 aa)).

The protein belongs to the SMC family. MukB subfamily. In terms of assembly, homodimerization via its hinge domain. Binds to DNA via its C-terminal region. Interacts, and probably forms a ternary complex, with MukE and MukF via its C-terminal region. The complex formation is stimulated by calcium or magnesium. Interacts with tubulin-related protein FtsZ.

The protein resides in the cytoplasm. It is found in the nucleoid. Functionally, plays a central role in chromosome condensation, segregation and cell cycle progression. Functions as a homodimer, which is essential for chromosome partition. Involved in negative DNA supercoiling in vivo, and by this means organize and compact chromosomes. May achieve or facilitate chromosome segregation by condensation DNA from both sides of a centrally located replisome during cell division. In Yersinia enterocolitica serotype O:8 / biotype 1B (strain NCTC 13174 / 8081), this protein is Chromosome partition protein MukB.